We begin with the raw amino-acid sequence, 299 residues long: Nucleoporin POM34 (299 aa).

Residues 1-39 (MKIQAGQLGLDDNDVPGPLPDTDSKPSSQSQNDTPMFKL) form a disordered region. The segment covering 25-34 (KPSSQSQNDT) has biased composition (polar residues). A run of 2 helical transmembrane segments spans residues 64–84 (IMTN…IKFF) and 133–153 (LFHL…LSTV). S270 is modified (phosphoserine). T273 carries the phosphothreonine modification. Phosphoserine occurs at positions 292 and 294.

In terms of assembly, component of the nuclear pore complex (NPC). NPC constitutes the exclusive means of nucleocytoplasmic transport. NPCs allow the passive diffusion of ions and small molecules and the active, nuclear transport receptor-mediated bidirectional transport of macromolecules such as proteins, RNAs, ribonucleoparticles (RNPs), and ribosomal subunits across the nuclear envelope. Due to its 8-fold rotational symmetry, all subunits are present with 8 copies or multiples thereof.

It localises to the nucleus. The protein localises to the nuclear pore complex. The protein resides in the nucleus membrane. Its function is as follows. Functions as a component of the nuclear pore complex (NPC). NPC components, collectively referred to as nucleoporins (NUPs), can play the role of both NPC structural components and of docking or interaction partners for transiently associated nuclear transport factors. This is Nucleoporin POM34 (POM34) from Saccharomyces cerevisiae (strain ATCC 204508 / S288c) (Baker's yeast).